A 328-amino-acid chain; its full sequence is Cytochrome c biogenesis protein CcsA (328 aa).

A run of 8 helical transmembrane segments spans residues 13-33, 46-66, 73-93, 101-121, 146-166, 234-254, 263-283, and 295-315; these read ISFS…LVNL, GIVI…IYSG, LYES…VSYF, LNAI…SGLL, MVLG…LLVI, IISL…VWAN, WDPK…YLHI, and AIVA…VNLL.

It belongs to the CcmF/CycK/Ccl1/NrfE/CcsA family. As to quaternary structure, may interact with Ccs1.

Its subcellular location is the plastid. It is found in the chloroplast thylakoid membrane. In terms of biological role, required during biogenesis of c-type cytochromes (cytochrome c6 and cytochrome f) at the step of heme attachment. The chain is Cytochrome c biogenesis protein CcsA from Aethionema cordifolium (Lebanon stonecress).